The sequence spans 293 residues: Ribosomal RNA small subunit methyltransferase H (293 aa).

S-adenosyl-L-methionine contacts are provided by residues 34 to 36 (GGH), Asp-54, Leu-86, Asp-101, and Gln-108.

The protein belongs to the methyltransferase superfamily. RsmH family.

The protein localises to the cytoplasm. The enzyme catalyses cytidine(1402) in 16S rRNA + S-adenosyl-L-methionine = N(4)-methylcytidine(1402) in 16S rRNA + S-adenosyl-L-homocysteine + H(+). In terms of biological role, specifically methylates the N4 position of cytidine in position 1402 (C1402) of 16S rRNA. The protein is Ribosomal RNA small subunit methyltransferase H of Elusimicrobium minutum (strain Pei191).